The sequence spans 528 residues: Neuronal acetylcholine receptor subunit alpha-2 (528 aa).

Residues 1–23 form the signal peptide; the sequence is MGWPCRSIIPLLVWCFVTLQAAT. Residues 24 to 239 are Extracellular-facing; it reads REQKQPHGFA…ITFYFVIRRL (216 aa). N-linked (GlcNAc...) asparagine glycosylation is found at Asn-54 and Asn-104. 2 disulfide bridges follow: Cys-158-Cys-172 and Cys-222-Cys-223. 3 helical membrane-spanning segments follow: residues 240–264, 272–290, and 306–327; these read PLFY…VFYL, ITLC…LLIT, and YLLF…VLNV. At 328–501 the chain is on the cytoplasmic side; that stretch reads HHRSPSTHTM…WKYVAMVIDR (174 aa). Residues 390–410 are compositionally biased toward acidic residues; sequence DDKWEEEEEEEEEEEEEEEEE. The segment at 390 to 427 is disordered; the sequence is DDKWEEEEEEEEEEEEEEEEEKAYPSRVPSGGSQGTQC. The chain crosses the membrane as a helical span at residues 502–520; sequence IFLWMFIIVCLLGTVGLFL.

It belongs to the ligand-gated ion channel (TC 1.A.9) family. Acetylcholine receptor (TC 1.A.9.1) subfamily. Alpha-2/CHRNA2 sub-subfamily. Neuronal AChR is composed of two different types of subunits: alpha and non-alpha (beta). CHRNA2/alpha-2 subunit can be combined to CHRNB2/beta-2 or CHRNB4/beta-4 to give rise to functional receptors. Both CHRNA2:CHRNB2 and CHRNA2:CHRNB4 nAChR complexes are heteropentamers with two subtypes: LS (low agonist sensitivity) with a (CHRNA2)3:(CHRNB2/4)2 and HS (high agonist sensitivity) with a (CHRNA2)2:(CHRNB2/4)3 stoichiometries; the subtypes differ in their subunit binding interfaces which are involved in ligand binding.

It is found in the synaptic cell membrane. It localises to the cell membrane. It catalyses the reaction Ca(2+)(in) = Ca(2+)(out). The catalysed reaction is K(+)(in) = K(+)(out). The enzyme catalyses Na(+)(in) = Na(+)(out). Its function is as follows. Component of neuronal acetylcholine receptors (nAChRs) that function as pentameric, ligand-gated cation channels with high calcium permeability among other activities. nAChRs are excitatory neurotrasnmitter receptors formed by a collection of nAChR subunits known to mediate synaptic transmission in the nervous system and the neuromuscular junction. Each nAchR subunit confers differential attributes to channel properties, including activation, deactivation and desensitization kinetics, pH sensitivity, cation permeability, and binding to allosteric modulators. CHRNA2 forms heteropentameric neuronal acetylcholine receptors with CHRNB2 and CHRNB4 and plays a role in nicotine dependence. The sequence is that of Neuronal acetylcholine receptor subunit alpha-2 (CHRNA2) from Gallus gallus (Chicken).